The primary structure comprises 180 residues: Large ribosomal subunit protein uL5 (180 aa).

Belongs to the universal ribosomal protein uL5 family. Part of the 50S ribosomal subunit; part of the 5S rRNA/L5/L18/L25 subcomplex. Contacts the 5S rRNA and the P site tRNA. Forms a bridge to the 30S subunit in the 70S ribosome.

This is one of the proteins that bind and probably mediate the attachment of the 5S RNA into the large ribosomal subunit, where it forms part of the central protuberance. In the 70S ribosome it contacts protein S13 of the 30S subunit (bridge B1b), connecting the 2 subunits; this bridge is implicated in subunit movement. Contacts the P site tRNA; the 5S rRNA and some of its associated proteins might help stabilize positioning of ribosome-bound tRNAs. This is Large ribosomal subunit protein uL5 from Symbiobacterium thermophilum (strain DSM 24528 / JCM 14929 / IAM 14863 / T).